We begin with the raw amino-acid sequence, 317 residues long: Acetyl-coenzyme A carboxylase carboxyl transferase subunit alpha (317 aa).

The region spanning 40–293 is the CoA carboxyltransferase C-terminal domain; it reads LEKRSADALK…GDIIAASLRS (254 aa).

Belongs to the AccA family. In terms of assembly, acetyl-CoA carboxylase is a heterohexamer composed of biotin carboxyl carrier protein (AccB), biotin carboxylase (AccC) and two subunits each of ACCase subunit alpha (AccA) and ACCase subunit beta (AccD).

It localises to the cytoplasm. The catalysed reaction is N(6)-carboxybiotinyl-L-lysyl-[protein] + acetyl-CoA = N(6)-biotinyl-L-lysyl-[protein] + malonyl-CoA. It functions in the pathway lipid metabolism; malonyl-CoA biosynthesis; malonyl-CoA from acetyl-CoA: step 1/1. In terms of biological role, component of the acetyl coenzyme A carboxylase (ACC) complex. First, biotin carboxylase catalyzes the carboxylation of biotin on its carrier protein (BCCP) and then the CO(2) group is transferred by the carboxyltransferase to acetyl-CoA to form malonyl-CoA. The protein is Acetyl-coenzyme A carboxylase carboxyl transferase subunit alpha of Brucella canis (strain ATCC 23365 / NCTC 10854 / RM-666).